The sequence spans 21 residues: Protein YadW (21 aa).

This chain is Protein YadW, found in Escherichia coli (strain K12).